Here is a 308-residue protein sequence, read N- to C-terminus: Probable GTP 3',8-cyclase (308 aa).

The Radical SAM core domain occupies 4 to 224 (RFGRPLEDLR…QIRKKHFRPR (221 aa)). A GTP-binding site is contributed by R13. Residues C20, C24, and C27 each coordinate [4Fe-4S] cluster. Residue K60 participates in GTP binding. G64 contacts S-adenosyl-L-methionine. Position 90 (T90) interacts with GTP. S-adenosyl-L-methionine is bound at residue S114. GTP is bound at residue K151. [4Fe-4S] cluster-binding residues include C245 and C248. 250-252 (RIR) provides a ligand contact to GTP. C262 is a [4Fe-4S] cluster binding site.

It belongs to the radical SAM superfamily. MoaA family. [4Fe-4S] cluster serves as cofactor.

The enzyme catalyses GTP + AH2 + S-adenosyl-L-methionine = (8S)-3',8-cyclo-7,8-dihydroguanosine 5'-triphosphate + 5'-deoxyadenosine + L-methionine + A + H(+). Its pathway is cofactor biosynthesis; molybdopterin biosynthesis. In terms of biological role, catalyzes the cyclization of GTP to (8S)-3',8-cyclo-7,8-dihydroguanosine 5'-triphosphate. This chain is Probable GTP 3',8-cyclase, found in Saccharolobus islandicus (strain M.16.27) (Sulfolobus islandicus).